The primary structure comprises 487 residues: Cobyric acid synthase (487 aa).

The GATase cobBQ-type domain maps to 249–435; the sequence is GIDIAIVRLP…IHGIFDEGDF (187 aa). The active-site Nucleophile is C330. The active site involves H427.

Belongs to the CobB/CobQ family. CobQ subfamily.

Its pathway is cofactor biosynthesis; adenosylcobalamin biosynthesis. Catalyzes amidations at positions B, D, E, and G on adenosylcobyrinic A,C-diamide. NH(2) groups are provided by glutamine, and one molecule of ATP is hydrogenolyzed for each amidation. In Clostridium perfringens (strain ATCC 13124 / DSM 756 / JCM 1290 / NCIMB 6125 / NCTC 8237 / Type A), this protein is Cobyric acid synthase.